Here is a 402-residue protein sequence, read N- to C-terminus: Dihydrolipoyllysine-residue acetyltransferase component of pyruvate dehydrogenase complex (402 aa).

The 69-residue stretch at 1-69 folds into the Lipoyl-binding domain; the sequence is MPDIGLEEVE…KTSSIIMIFK (69 aa). Lysine 35 is modified (N6-lipoyllysine). The Peripheral subunit-binding (PSBD) domain maps to 109–146; the sequence is HATPVVRRLARHLNVDLKNITPSGPKNRILKEDIELYI. Histidine 375 is an active-site residue.

This sequence belongs to the 2-oxoacid dehydrogenase family. As to quaternary structure, forms a 24-polypeptide structural core with octahedral symmetry. It depends on (R)-lipoate as a cofactor.

It carries out the reaction N(6)-[(R)-dihydrolipoyl]-L-lysyl-[protein] + acetyl-CoA = N(6)-[(R)-S(8)-acetyldihydrolipoyl]-L-lysyl-[protein] + CoA. The pyruvate dehydrogenase complex catalyzes the overall conversion of pyruvate to acetyl-CoA and CO(2). It contains multiple copies of three enzymatic components: pyruvate dehydrogenase (E1), dihydrolipoamide acetyltransferase (E2) and lipoamide dehydrogenase (E3). The polypeptide is Dihydrolipoyllysine-residue acetyltransferase component of pyruvate dehydrogenase complex (aceF) (Buchnera aphidicola subsp. Schizaphis graminum (strain Sg)).